The chain runs to 237 residues: Ribosomal RNA small subunit methyltransferase G (237 aa).

Residues 1 to 25 (MASRHSPQTAAQPDAADKAQALRLT) are disordered. A compositionally biased stretch (low complexity) spans 7–21 (PQTAAQPDAADKAQA). S-adenosyl-L-methionine-binding residues include Gly-85, Phe-90, and Arg-155.

It belongs to the methyltransferase superfamily. RNA methyltransferase RsmG family.

It localises to the cytoplasm. The enzyme catalyses guanosine(527) in 16S rRNA + S-adenosyl-L-methionine = N(7)-methylguanosine(527) in 16S rRNA + S-adenosyl-L-homocysteine. Functionally, specifically methylates the N7 position of guanine in position 527 of 16S rRNA. The sequence is that of Ribosomal RNA small subunit methyltransferase G from Rhodopseudomonas palustris (strain HaA2).